Consider the following 414-residue polypeptide: Tryptophan synthase beta chain (414 aa).

The interval 1–28 is disordered; sequence MVSTISRQDQNNNDDLNQPSKEGRFGKY. Positions 8-18 are enriched in low complexity; it reads QDQNNNDDLNQ. Lysine 108 carries the post-translational modification N6-(pyridoxal phosphate)lysine.

Belongs to the TrpB family. Tetramer of two alpha and two beta chains. Pyridoxal 5'-phosphate is required as a cofactor.

It catalyses the reaction (1S,2R)-1-C-(indol-3-yl)glycerol 3-phosphate + L-serine = D-glyceraldehyde 3-phosphate + L-tryptophan + H2O. It functions in the pathway amino-acid biosynthesis; L-tryptophan biosynthesis; L-tryptophan from chorismate: step 5/5. Its function is as follows. The beta subunit is responsible for the synthesis of L-tryptophan from indole and L-serine. This chain is Tryptophan synthase beta chain, found in Prochlorococcus marinus subsp. pastoris (strain CCMP1986 / NIES-2087 / MED4).